The following is a 528-amino-acid chain: Linear primary-alkylsulfatase (528 aa).

Zn(2+) contacts are provided by His-42, His-44, Asp-46, His-47, Glu-151, and Glu-170. Residues 179–184 and Arg-189 each bind sulfate; that span reads NVHTLR. Residue His-213 participates in Zn(2+) binding. Tyr-275 lines the sulfate pocket.

It belongs to the metallo-beta-lactamase superfamily. Type III sulfatase family. The cofactor is Zn(2+).

It catalyses the reaction a primary linear alkyl sulfate ester + H2O = a primary alcohol + sulfate + H(+). Functionally, alkylsulfatase that cleaves the widely used detergent sodium dodecyl sulfate (SDS), which allows the bacterium to use SDS as a sole carbon or sulfur source. This is Linear primary-alkylsulfatase from Pseudomonas sp. (strain ATCC 19151).